The sequence spans 242 residues: Small ribosomal subunit protein eS4 (242 aa).

Residues 43-106 (LPLMIIVRDI…GDVYRVLPDE (64 aa)) enclose the S4 RNA-binding domain.

This sequence belongs to the eukaryotic ribosomal protein eS4 family.

This is Small ribosomal subunit protein eS4 (rps4e) from Methanothermobacter thermautotrophicus (strain ATCC 29096 / DSM 1053 / JCM 10044 / NBRC 100330 / Delta H) (Methanobacterium thermoautotrophicum).